A 127-amino-acid chain; its full sequence is Small ribosomal subunit protein uS12m (127 aa).

Belongs to the universal ribosomal protein uS12 family.

The protein localises to the mitochondrion. In terms of biological role, protein S12 is involved in the translation initiation step. In Chondrus crispus (Carrageen Irish moss), this protein is Small ribosomal subunit protein uS12m (RPS12).